The primary structure comprises 104 residues: uncharacterized protein (104 aa).

This is an uncharacterized protein from Archaeoglobus fulgidus (strain ATCC 49558 / DSM 4304 / JCM 9628 / NBRC 100126 / VC-16).